The chain runs to 273 residues: Phosphate import ATP-binding protein PstB 1 (273 aa).

Positions 27–268 (ISIEHLSLYY…PLKKQTEDYI (242 aa)) constitute an ABC transporter domain. 59 to 66 (GPSGCGKS) contributes to the ATP binding site.

It belongs to the ABC transporter superfamily. Phosphate importer (TC 3.A.1.7) family. In terms of assembly, the complex is composed of two ATP-binding proteins (PstB), two transmembrane proteins (PstC and PstA) and a solute-binding protein (PstS).

It localises to the cell inner membrane. It catalyses the reaction phosphate(out) + ATP + H2O = ADP + 2 phosphate(in) + H(+). In terms of biological role, part of the ABC transporter complex PstSACB involved in phosphate import. Responsible for energy coupling to the transport system. This chain is Phosphate import ATP-binding protein PstB 1, found in Vibrio cholerae serotype O1 (strain ATCC 39315 / El Tor Inaba N16961).